Reading from the N-terminus, the 328-residue chain is D-cysteine desulfhydrase (328 aa).

The residue at position 51 (Lys51) is an N6-(pyridoxal phosphate)lysine.

Belongs to the ACC deaminase/D-cysteine desulfhydrase family. In terms of assembly, homodimer. Pyridoxal 5'-phosphate serves as cofactor.

It carries out the reaction D-cysteine + H2O = hydrogen sulfide + pyruvate + NH4(+) + H(+). Catalyzes the alpha,beta-elimination reaction of D-cysteine and of several D-cysteine derivatives. It could be a defense mechanism against D-cysteine. The protein is D-cysteine desulfhydrase of Escherichia coli (strain UTI89 / UPEC).